Reading from the N-terminus, the 244-residue chain is Phosphoadenosine 5'-phosphosulfate reductase (244 aa).

The active-site Nucleophile; cysteine thiosulfonate intermediate is Cys239.

It belongs to the PAPS reductase family. CysH subfamily.

The protein localises to the cytoplasm. It carries out the reaction [thioredoxin]-disulfide + sulfite + adenosine 3',5'-bisphosphate + 2 H(+) = [thioredoxin]-dithiol + 3'-phosphoadenylyl sulfate. It functions in the pathway sulfur metabolism; hydrogen sulfide biosynthesis; sulfite from sulfate: step 3/3. Its function is as follows. Catalyzes the formation of sulfite from phosphoadenosine 5'-phosphosulfate (PAPS) using thioredoxin as an electron donor. This chain is Phosphoadenosine 5'-phosphosulfate reductase, found in Shigella boydii serotype 4 (strain Sb227).